The following is a 193-amino-acid chain: Lipopolysaccharide core heptose(II)-phosphate phosphatase (193 aa).

A signal peptide spans 1–25; that stretch reads MKLKKHVAVLLISFLCLIGLVTQHA.

The protein belongs to the phosphoglycerate mutase family. Ais subfamily.

It is found in the periplasm. Its pathway is bacterial outer membrane biogenesis; lipopolysaccharide metabolism. Catalyzes the dephosphorylation of heptose(II) of the outer membrane lipopolysaccharide core. The protein is Lipopolysaccharide core heptose(II)-phosphate phosphatase of Escherichia fergusonii (strain ATCC 35469 / DSM 13698 / CCUG 18766 / IAM 14443 / JCM 21226 / LMG 7866 / NBRC 102419 / NCTC 12128 / CDC 0568-73).